A 93-amino-acid chain; its full sequence is Small ribosomal subunit protein bS16 (93 aa).

Belongs to the bacterial ribosomal protein bS16 family.

The sequence is that of Small ribosomal subunit protein bS16 from Roseiflexus castenholzii (strain DSM 13941 / HLO8).